Consider the following 307-residue polypeptide: Ubiquitin recognition factor in ER-associated degradation protein 1 (307 aa).

Position 1 is an N-acetylmethionine (M1). Phosphoserine occurs at positions 129, 231, 245, 247, and 299. 2 disordered regions span residues 230–255 (GSGN…GDIK) and 288–307 (GRFI…GRKP).

The protein belongs to the UFD1 family. As to quaternary structure, heterodimer with NPLOC4, this heterodimer binds VCP and inhibits Golgi membrane fusion. Interacts with USP13. Interacts with ZFAND2B; probably through VCP.

The protein localises to the nucleus. It is found in the cytoplasm. The protein resides in the cytosol. It functions in the pathway protein degradation; proteasomal ubiquitin-dependent pathway. In terms of biological role, essential component of the ubiquitin-dependent proteolytic pathway which degrades ubiquitin fusion proteins. The ternary complex containing UFD1, VCP and NPLOC4 binds ubiquitinated proteins and is necessary for the export of misfolded proteins from the ER to the cytoplasm, where they are degraded by the proteasome. The NPLOC4-UFD1-VCP complex regulates spindle disassembly at the end of mitosis and is necessary for the formation of a closed nuclear envelope. It may be involved in the development of some ectoderm-derived structures. Acts as a negative regulator of type I interferon production via the complex formed with VCP and NPLOC4, which binds to RIGI and recruits RNF125 to promote ubiquitination and degradation of RIGI. This Mus musculus (Mouse) protein is Ubiquitin recognition factor in ER-associated degradation protein 1.